Here is a 1075-residue protein sequence, read N- to C-terminus: Nuclear factor of activated T-cells, cytoplasmic 3 (1075 aa).

Thr2 bears the N-acetylthreonine mark. The tract at residues 18 to 37 (FGEDGAPAPPPPGSRPADLE) is disordered. The calcineurin-binding stretch occupies residues 109–114 (PSIQIT). Positions 205 to 306 (LGSPLTSPGG…PGHSPRGSVT (102 aa)) are disordered. 2 consecutive repeat copies span residues 207 to 223 (SPLT…PGEE) and 236 to 252 (SPRQ…VTDE). A 3 X SP repeats region spans residues 207-308 (SPLTSPGGSP…HSPRGSVTED (102 aa)). Polar residues predominate over residues 236–253 (SPRQSPCHSPRSSVTDEN). The span at 256 to 270 (SPRPASGPSSRPTSP) shows a compositional bias: low complexity. The short motif at 273–275 (KRR) is the Nuclear localization signal element. Residues 292–308 (SPVPSPGHSPRGSVTED) form repeat 3. A phosphoserine mark is found at Ser344 and Ser372. The 182-residue stretch at 415–596 (SSLPPLDWPL…IPVECSQRSA (182 aa)) folds into the RHD domain. The DNA-binding element occupies 444–451 (RAHYETEG). The Nuclear localization signal motif lies at 686 to 688 (KRK). Disordered regions lie at residues 711 to 739 (DLSS…SHDS) and 887 to 988 (SNTG…GLSA). 2 stretches are compositionally biased toward polar residues: residues 724–739 (AQTQ…SHDS) and 887–912 (SNTG…QLQP). Low complexity-rich tracts occupy residues 916-939 (GPSH…SSPL) and 949-967 (PMPY…SPAT). Residues 970–981 (HSGQHSTQAQST) show a composition bias toward polar residues. A Nuclear export signal motif is present at residues 1032-1041 (TLDDVNEIIG). The interval 1049–1075 (VSQGAGVSRQAPLPSPESLDLGRSDGL) is disordered. Ser1063 and Ser1066 each carry phosphoserine.

As to quaternary structure, NFATC proteins bind to DNA as monomers. Member of the multicomponent NFATC transcription complex that consists of at least two components, a pre-existing cytoplasmic component NFATC2 and an inducible nuclear component NFATC1. Other members such as NFATC4, or members of the activating protein-1 family, MAF, GATA4 and Cbp/p300 can also bind the complex. Component of a promoter-binding complex composed of STAT3, NFATC3 and NFATC4; complex formation is enhanced by calcineurin. Interacts with TRIM17; this interaction prevents NFATC3 nuclear localization. Interacts with and ubiquitinated by STUB1/CHIP; HSPA1A/HSP70 is required as a co-chaperone. In terms of processing, ubiquitinated by STUB1/CHIP, leading to proteasomal degradation. Phosphorylated by NFATC-kinase; dephosphorylated by calcineurin. As to expression, predominantly expressed in thymus and is also found in peripheral blood leukocytes and kidney. Predominantly expressed in skeletal muscle. Also found weakly expressed in the thymus, kidney, testis, spleen, prostate, ovary, small intestine, heart, placenta and pancreas. In terms of tissue distribution, expressed in thymus and kidney. As to expression, expressed in thymus and skeletal muscle.

Its subcellular location is the cytoplasm. The protein localises to the nucleus. Acts as a regulator of transcriptional activation. Binds to the TNFSF11/RANKL promoter region and promotes TNFSF11 transcription. Binding to the TNFSF11 promoter region is increased by high levels of Ca(2+) which induce NFATC3 expression and may lead to regulation of TNFSF11 expression in osteoblasts. Plays a role in promoting mesenteric arterial wall remodeling in response to the intermittent hypoxia-induced increase in EDN1 and ROCK signaling. As a result NFATC3 colocalizes with F-actin filaments, translocates to the nucleus and promotes transcription of the smooth muscle hypertrophy and differentiation marker ACTA2. Promotes lipopolysaccharide-induced apoptosis and hypertrophy in cardiomyocytes. Following JAK/STAT signaling activation and as part of a complex with NFATC4 and STAT3, binds to the alpha-beta E4 promoter region of CRYAB and activates transcription in cardiomyocytes. In conjunction with NFATC4, involved in embryonic heart development via maintenance of cardiomyocyte survival, proliferation and differentiation. Plays a role in the inducible expression of cytokine genes in T-cells, especially in the induction of the IL-2. Required for thymocyte maturation during DN3 to DN4 transition and during positive selection. Positively regulates macrophage-derived polymicrobial clearance, via binding to the promoter region and promoting transcription of NOS2 resulting in subsequent generation of nitric oxide. Involved in Ca(2+)-mediated transcriptional responses upon Ca(2+) influx via ORAI1 CRAC channels. This chain is Nuclear factor of activated T-cells, cytoplasmic 3, found in Homo sapiens (Human).